The primary structure comprises 342 residues: MNAGHTETVRALRIGVAGCADIALRRMLPAFAASPHTEPTAVASRSSEKARAAAETFGCAAVEGYDALLERRDVDAVYIPLPVALHAPWTERALRAGKHVLAEKPLTARAADTARLLDLARERGLVLAENYLFVHHSAYTAVRDLVDAGAIGDVRALSASFTIPPRSADDIRYRADLDGGALLDIGVYPLRLASLLLGSELRVRGAVLRHDTVRGVDLGGSALLGDPGTGVSAQLVFGMEHAYTAGWRLLGSEGSLTLDRAYSPPAGHRPVLRIERPDGTEERILPAHDQATAAVAAFAEAVRRAGQGAGQDKGRSSGDAAAVLRQAELVDAVRQAAHLVKI.

Residue 19–25 (CADIALR) participates in NADP(+) binding. Arg-26 serves as a coordination point for substrate. Residues 44 to 45 (SR), Tyr-65, Leu-81, and His-86 each bind NADP(+). Lys-104 (proton donor) is an active-site residue. Positions 172 and 184 each coordinate NADP(+). Residues Tyr-243 and Ser-263 each coordinate substrate.

It belongs to the Gfo/Idh/MocA family.

It catalyses the reaction dTDP-4-dehydro-2,6-dideoxy-alpha-D-glucose + NADP(+) = dTDP-3,4-didehydro-2,6-dideoxy-alpha-D-glucose + NADPH + H(+). It participates in antibiotic biosynthesis; granaticin biosynthesis. Involved in the biosynthesis of the 2,6-deoxysugar, dTDP-L-rhodinose, attached to the benzoisochromane quinone chromophore to produce the aglycone antibiotics granaticin and granaticin B. Catalyzes the reduction of the C-3 keto moiety of dTDP-3,4-diketo-2,6-dideoxy-alpha-D-glucose to yield dTDP-4-keto-2,6-dideoxy-alpha-D-glucose. NADPH is the better reductant, however NADH can also be used. The sequence is that of dTDP-3,4-didehydro-2,6-dideoxy-alpha-D-glucose 3-reductase from Streptomyces violaceoruber.